The sequence spans 455 residues: MLDIKLIRENPELVKNDLIKRGELEKVKWVDEILKLDTEWRTKLKEINRLRHERNKIAVEIGKRRKKGEPVDELLAKSREIVKRIGELENEVEELKKKIDYYLWRLPNITHPSVPVGKDENDNVPIRFWGKARVWKGHLERFLEQSQGKMEYEILEWKPKLHVDLLEILGGADFARAAKVSGSRFYYLLNEIVILDLALIRFALDRLIEKGFTPVIPPYMVRRFVEEGSTSFEDFEDVIYKVEDEDLYLIPTAEHPLAGMHANEILDGKDLPLLYVGVSPCFRKEAGTAGKDTKGIFRVHQFHKVEQFVYSRPEESWEWHEKIIRNAEELFQELEIPYRVVNICTGDLGYVAAKKYDIEAWMPGQGKFREVVSASNCTDWQARRLNIRFRDRTDEKPRYVHTLNSTAIATSRAIVAILENHQEEDGTVRIPKVLWKYTGFKEIVPVEKKERCCAT.

252-254 (TAE) provides a ligand contact to L-serine. Residues 283–285 (RKE) and valine 299 contribute to the ATP site. Glutamate 306 is an L-serine binding site. 370 to 373 (EVVS) serves as a coordination point for ATP. Position 406 (threonine 406) interacts with L-serine.

The protein belongs to the class-II aminoacyl-tRNA synthetase family. Type-1 seryl-tRNA synthetase subfamily. Homodimer. The tRNA molecule binds across the dimer.

It is found in the cytoplasm. It catalyses the reaction tRNA(Ser) + L-serine + ATP = L-seryl-tRNA(Ser) + AMP + diphosphate + H(+). The enzyme catalyses tRNA(Sec) + L-serine + ATP = L-seryl-tRNA(Sec) + AMP + diphosphate + H(+). Its pathway is aminoacyl-tRNA biosynthesis; selenocysteinyl-tRNA(Sec) biosynthesis; L-seryl-tRNA(Sec) from L-serine and tRNA(Sec): step 1/1. Functionally, catalyzes the attachment of serine to tRNA(Ser). Is also able to aminoacylate tRNA(Sec) with serine, to form the misacylated tRNA L-seryl-tRNA(Sec), which will be further converted into selenocysteinyl-tRNA(Sec). This Pyrococcus horikoshii (strain ATCC 700860 / DSM 12428 / JCM 9974 / NBRC 100139 / OT-3) protein is Serine--tRNA ligase.